The following is a 103-amino-acid chain: UPF0235 protein RL4503 (103 aa).

Belongs to the UPF0235 family.

This is UPF0235 protein RL4503 from Rhizobium johnstonii (strain DSM 114642 / LMG 32736 / 3841) (Rhizobium leguminosarum bv. viciae).